Reading from the N-terminus, the 319-residue chain is Serine acetyltransferase, plasmid (319 aa).

The protein belongs to the transferase hexapeptide repeat family.

The protein resides in the cytoplasm. The catalysed reaction is L-serine + acetyl-CoA = O-acetyl-L-serine + CoA. The protein operates within amino-acid biosynthesis; L-cysteine biosynthesis; L-cysteine from L-serine: step 1/2. The chain is Serine acetyltransferase, plasmid (srpH) from Synechococcus elongatus (strain ATCC 33912 / PCC 7942 / FACHB-805) (Anacystis nidulans R2).